The chain runs to 511 residues: 2-isopropylmalate synthase (511 aa).

Positions Ile-6 to Phe-269 constitute a Pyruvate carboxyltransferase domain. Mn(2+) contacts are provided by Asp-15, His-203, His-205, and Asn-239. The interval Val-394 to Ala-511 is regulatory domain.

Belongs to the alpha-IPM synthase/homocitrate synthase family. LeuA type 1 subfamily. As to quaternary structure, homodimer. The cofactor is Mn(2+).

Its subcellular location is the cytoplasm. It catalyses the reaction 3-methyl-2-oxobutanoate + acetyl-CoA + H2O = (2S)-2-isopropylmalate + CoA + H(+). It participates in amino-acid biosynthesis; L-leucine biosynthesis; L-leucine from 3-methyl-2-oxobutanoate: step 1/4. Functionally, catalyzes the condensation of the acetyl group of acetyl-CoA with 3-methyl-2-oxobutanoate (2-ketoisovalerate) to form 3-carboxy-3-hydroxy-4-methylpentanoate (2-isopropylmalate). The chain is 2-isopropylmalate synthase from Campylobacter jejuni subsp. jejuni serotype O:2 (strain ATCC 700819 / NCTC 11168).